Here is a 1462-residue protein sequence, read N- to C-terminus: MGAKNSVLRGKKADELEKIRLRPGGKKKYRLKHIVWAANELDRFGLTESLLESKEGCQKIISVLEPLVPTGSENLKSLYNTTCVIWCLHAEEKVKDTEEAKRIVGRHLVAETETAEKMPNISRPTAPPSGKGGNFPVQQIGGNYVHLPLSPRTLNAWVKLVEEKKFGAEVVPGFQALSEGCTPYDINQMLNCVGDHQAAMQIIREIINEEAADWDVQHPIPGPLPAGQLRDPRGSDIAGTTSTVEEQIEWMYRQENPVPVGNIYRRWIQIGLQKCVRMYNPTNILDIKQGPKESFQSYVDRFYKSLRAEQTDAAVKNWMTQTLLVQSNPDCKLVLKGLGMNPTLEEMLTACQGIGGPGQKARLMAEALKEAMRPAPIPFAAAQQKRAIKCWNCGKEGHSARQCRAPRRQGCWKCGKSGHIMANCPDRQAGFLRAWTMGKEAPQLPRGPKFAGANTNSTPNGSSSGPTGEVHAAREKTERAETKTIQRSDRGLAASRARRDTTQRDDRGLAAPQFSLWKRPVVTAYIEDQPVEVLLDTGADDSIVAGIELGSNYSPKIVGGIGGFINTKEYKDVEIRVLNKKVRATIMTGDTPINIFGRNILTALGMSLNLPVAKIEPVKVTLKPGKDGPKQRQWPLTREKIEALREICEKMEREGQLEEAPPTNPYNTPTFAIKKKDKNKWRMLIDFRELNKVTQDFTEVQLGIPHPAGLAKKRRITVLDVGDAYFSIPLYEDFRQYTAFTLPSVNNAEPGKRYIYKVLPQGWKGSPAIFQYTMRQVLEPFRKANPDVIIVQYMDDILIASDRTDLEHDKVVLQLKELLNGLGFSTPDEKFQKDPPYQWMGYELWPTKWKLQKIQLPQKEVWTVNDIQKLVGVLNWAAQIYPGIKTKHLCKLIRGKMTPTEEVQWTELAEAELEENKIILSQEQEGHYYQEEKELEATVQKDQDNQWTYKVHQGEKILKVGKYAKIKNTHTNGVRLLAQVVQKIGKEALVIWGRIPKFHLPVERETWEQWWDNYWQVTWIPDWDFVSTPPLVRLAFNLVKDPIPGAETFYTDGSCNRQSKEGKAGYITDRGKDKVRILEQTTNQQAELEAFAMAVTDSGPKVNIVVDSQYVMGIVTGQPAESESRIVNKIIEEMIKKEAIYVAWVPAHKGIGGNQEIDHLVSQGIRQVLFLERIEPAQEEHGKYHSNVKELAHKFGLPNLVARQIVNTCAQCQQKGEAIHGQVNAELGTWQMDCTHLEGKIIIVAVHVASGFIEAEVIPQESGRQTALFLLKLASRWPITHLHTDNGANFTSQEVKMVAWWVGIEQSFGVPYNPQSQGVVEAMNHHLKNQIERIREQANTMETIVLMAVHCMNFKRRGGIGDMTPVERLVNMITTEQEIQFLQAKNSKLKNFRVYFREGRNQLWQGPGELLWKGDGAVIVKVGTDIKVIPRRKAKIIRDYGPRQEMDSGSHLEGAREDGEMA.

G2 carries N-myristoyl glycine; by host lipidation. The interval 7–31 is interaction with Gp41; the sequence is VLRGKKADELEKIRLRPGGKKKYRL. Positions 16 to 22 match the Nuclear export signal motif; sequence LEKIRLR. Positions 26-32 match the Nuclear localization signal motif; sequence KKKYRLK. Positions 191–228 are interaction with human PPIA/CYPA and NUP153; sequence NCVGDHQAAMQIIREIINEEAADWDVQHPIPGPLPAGQ. The segment at 279-364 is dimerization/Multimerization of capsid protein p24; that stretch reads YNPTNILDIK…GGPGQKARLM (86 aa). 2 consecutive CCHC-type zinc fingers follow at residues 388–405 and 409–426; these read IKCWNCGKEGHSARQCRA and QGCWKCGKSGHIMANCPD. Residues 441 to 507 are disordered; that stretch reads APQLPRGPKF…RRDTTQRDDR (67 aa). Residues 454-468 show a composition bias toward low complexity; it reads NTNSTPNGSSSGPTG. Basic and acidic residues-rich tracts occupy residues 471-490 and 497-507; these read HAAREKTERAETKTIQRSDR and ARRDTTQRDDR. The tract at residues 512-516 is dimerization of protease; the sequence is PQFSL. The Peptidase A2 domain occupies 531-600; sequence VEVLLDTGAD…TPINIFGRNI (70 aa). Residue D536 is the For protease activity; shared with dimeric partner of the active site. 2 dimerization of protease regions span residues 560 to 566 and 599 to 611; these read GIGGFIN and NILTALGMSLNLP. One can recognise a Reverse transcriptase domain in the interval 654-844; that stretch reads EGQLEEAPPT…PPYQWMGYEL (191 aa). Mg(2+) contacts are provided by D720, D795, and D796. The tract at residues 837-845 is RT 'primer grip'; sequence YQWMGYELW. A Tryptophan repeat motif motif is present at residues 1007 to 1023; the sequence is WEQWWDNYWQVTWIPDW. Residues 1043–1166 enclose the RNase H type-1 domain; the sequence is IPGAETFYTD…IDHLVSQGIR (124 aa). 4 residues coordinate Mg(2+): D1052, E1087, D1107, and D1158. An Integrase-type zinc finger spans residues 1172–1213; sequence ERIEPAQEEHGKYHSNVKELAHKFGLPNLVARQIVNTCAQCQ. Residues H1181, H1185, C1209, and C1212 each coordinate Zn(2+). An Integrase catalytic domain is found at 1222-1373; the sequence is QVNAELGTWQ…TPVERLVNMI (152 aa). Residues D1233, D1285, and E1321 each contribute to the Mg(2+) site. The integrase-type DNA-binding region spans 1392–1439; sequence FRVYFREGRNQLWQGPGELLWKGDGAVIVKVGTDIKVIPRRKAKIIRD. Residues 1443–1462 are disordered; that stretch reads RQEMDSGSHLEGAREDGEMA.

Homotrimer; further assembles as hexamers of trimers. Interacts with gp41 (via C-terminus). Interacts with host CALM1; this interaction induces a conformational change in the Matrix protein, triggering exposure of the myristate group. Interacts with host AP3D1; this interaction allows the polyprotein trafficking to multivesicular bodies during virus assembly. Part of the pre-integration complex (PIC) which is composed of viral genome, matrix protein, Vpr and integrase. In terms of assembly, homodimer; the homodimer further multimerizes as homohexamers or homopentamers. Interacts with human PPIA/CYPA. Interacts with human NUP153. Interacts with host PDZD8; this interaction stabilizes the capsid. Interacts with monkey TRIM5; this interaction destabilizes the capsid. As to quaternary structure, homodimer, whose active site consists of two apposed aspartic acid residues. Heterodimer of p66 RT and p51 RT (RT p66/p51). Heterodimerization of RT is essential for DNA polymerase activity. The overall folding of the subdomains is similar in p66 RT and p51 RT but the spatial arrangements of the subdomains are dramatically different. In terms of assembly, homotetramer; may further associate as a homohexadecamer. Part of the pre-integration complex (PIC) which is composed of viral genome, matrix protein, Vpr and integrase. Interacts with human SMARCB1/INI1 and human PSIP1/LEDGF isoform 1. Interacts with human KPNA3; this interaction might play a role in nuclear import of the pre-integration complex. Interacts with human NUP153; this interaction might play a role in nuclear import of the pre-integration complex. It depends on Mg(2+) as a cofactor. In terms of processing, specific enzymatic cleavages by the viral protease yield mature proteins. The protease is released by autocatalytic cleavage. The polyprotein is cleaved during and after budding, this process is termed maturation. Proteolytic cleavage of p66 RT removes the RNase H domain to yield the p51 RT subunit. Nucleocapsid protein p7 might be further cleaved after virus entry.

The protein localises to the host cell membrane. The protein resides in the host endosome. It localises to the host multivesicular body. Its subcellular location is the virion membrane. It is found in the host nucleus. The protein localises to the host cytoplasm. The protein resides in the virion. The enzyme catalyses Endopeptidase for which the P1 residue is preferably hydrophobic.. The catalysed reaction is Endohydrolysis of RNA in RNA/DNA hybrids. Three different cleavage modes: 1. sequence-specific internal cleavage of RNA. Human immunodeficiency virus type 1 and Moloney murine leukemia virus enzymes prefer to cleave the RNA strand one nucleotide away from the RNA-DNA junction. 2. RNA 5'-end directed cleavage 13-19 nucleotides from the RNA end. 3. DNA 3'-end directed cleavage 15-20 nucleotides away from the primer terminus.. It carries out the reaction 3'-end directed exonucleolytic cleavage of viral RNA-DNA hybrid.. It catalyses the reaction DNA(n) + a 2'-deoxyribonucleoside 5'-triphosphate = DNA(n+1) + diphosphate. With respect to regulation, protease: The viral protease is inhibited by many synthetic protease inhibitors (PIs), such as amprenavir, atazanavir, indinavir, loprinavir, nelfinavir, ritonavir and saquinavir. Use of protease inhibitors in tritherapy regimens permit more ambitious therapeutic strategies. Reverse transcriptase/ribonuclease H: RT can be inhibited either by nucleoside RT inhibitors (NRTIs) or by non nucleoside RT inhibitors (NNRTIs). NRTIs act as chain terminators, whereas NNRTIs inhibit DNA polymerization by binding a small hydrophobic pocket near the RT active site and inducing an allosteric change in this region. Classical NRTIs are abacavir, adefovir (PMEA), didanosine (ddI), lamivudine (3TC), stavudine (d4T), tenofovir (PMPA), zalcitabine (ddC), and zidovudine (AZT). Classical NNRTIs are atevirdine (BHAP U-87201E), delavirdine, efavirenz (DMP-266), emivirine (I-EBU), and nevirapine (BI-RG-587). The tritherapies used as a basic effective treatment of AIDS associate two NRTIs and one NNRTI. Mediates, with Gag polyprotein, the essential events in virion assembly, including binding the plasma membrane, making the protein-protein interactions necessary to create spherical particles, recruiting the viral Env proteins, and packaging the genomic RNA via direct interactions with the RNA packaging sequence (Psi). Gag-Pol polyprotein may regulate its own translation, by the binding genomic RNA in the 5'-UTR. At low concentration, the polyprotein would promote translation, whereas at high concentration, the polyprotein would encapsidate genomic RNA and then shut off translation. Functionally, targets the polyprotein to the plasma membrane via a multipartite membrane-binding signal, that includes its myristoylated N-terminus. Matrix protein is part of the pre-integration complex. Implicated in the release from host cell mediated by Vpu. Binds to RNA. Its function is as follows. Forms the conical core that encapsulates the genomic RNA-nucleocapsid complex in the virion. Most core are conical, with only 7% tubular. The core is constituted by capsid protein hexamer subunits. The core is disassembled soon after virion entry. Host restriction factors such as TRIM5-alpha or TRIMCyp bind retroviral capsids and cause premature capsid disassembly, leading to blocks in reverse transcription. Capsid restriction by TRIM5 is one of the factors which restricts HIV-1 to the human species. Host PIN1 apparently facilitates the virion uncoating. On the other hand, interactions with PDZD8 or CYPA stabilize the capsid. In terms of biological role, encapsulates and protects viral dimeric unspliced genomic RNA (gRNA). Binds these RNAs through its zinc fingers. Acts as a nucleic acid chaperone which is involved in rearangement of nucleic acid secondary structure during gRNA retrotranscription. Also facilitates template switch leading to recombination. As part of the polyprotein, participates in gRNA dimerization, packaging, tRNA incorporation and virion assembly. Aspartyl protease that mediates proteolytic cleavages of Gag and Gag-Pol polyproteins during or shortly after the release of the virion from the plasma membrane. Cleavages take place as an ordered, step-wise cascade to yield mature proteins. This process is called maturation. Displays maximal activity during the budding process just prior to particle release from the cell. Also cleaves Nef and Vif, probably concomitantly with viral structural proteins on maturation of virus particles. Hydrolyzes host EIF4GI and PABP1 in order to shut off the capped cellular mRNA translation. The resulting inhibition of cellular protein synthesis serves to ensure maximal viral gene expression and to evade host immune response. Functionally, multifunctional enzyme that converts the viral RNA genome into dsDNA in the cytoplasm, shortly after virus entry into the cell. This enzyme displays a DNA polymerase activity that can copy either DNA or RNA templates, and a ribonuclease H (RNase H) activity that cleaves the RNA strand of RNA-DNA heteroduplexes in a partially processive 3' to 5' endonucleasic mode. Conversion of viral genomic RNA into dsDNA requires many steps. A tRNA(3)-Lys binds to the primer-binding site (PBS) situated at the 5'-end of the viral RNA. RT uses the 3' end of the tRNA primer to perform a short round of RNA-dependent minus-strand DNA synthesis. The reading proceeds through the U5 region and ends after the repeated (R) region which is present at both ends of viral RNA. The portion of the RNA-DNA heteroduplex is digested by the RNase H, resulting in a ssDNA product attached to the tRNA primer. This ssDNA/tRNA hybridizes with the identical R region situated at the 3' end of viral RNA. This template exchange, known as minus-strand DNA strong stop transfer, can be either intra- or intermolecular. RT uses the 3' end of this newly synthesized short ssDNA to perform the RNA-dependent minus-strand DNA synthesis of the whole template. RNase H digests the RNA template except for two polypurine tracts (PPTs) situated at the 5'-end and near the center of the genome. It is not clear if both polymerase and RNase H activities are simultaneous. RNase H probably can proceed both in a polymerase-dependent (RNA cut into small fragments by the same RT performing DNA synthesis) and a polymerase-independent mode (cleavage of remaining RNA fragments by free RTs). Secondly, RT performs DNA-directed plus-strand DNA synthesis using the PPTs that have not been removed by RNase H as primers. PPTs and tRNA primers are then removed by RNase H. The 3' and 5' ssDNA PBS regions hybridize to form a circular dsDNA intermediate. Strand displacement synthesis by RT to the PBS and PPT ends produces a blunt ended, linear dsDNA copy of the viral genome that includes long terminal repeats (LTRs) at both ends. Its function is as follows. Catalyzes viral DNA integration into the host chromosome, by performing a series of DNA cutting and joining reactions. This enzyme activity takes place after virion entry into a cell and reverse transcription of the RNA genome in dsDNA. The first step in the integration process is 3' processing. This step requires a complex comprising the viral genome, matrix protein, Vpr and integrase. This complex is called the pre-integration complex (PIC). The integrase protein removes 2 nucleotides from each 3' end of the viral DNA, leaving recessed CA OH's at the 3' ends. In the second step, the PIC enters cell nucleus. This process is mediated through integrase and Vpr proteins, and allows the virus to infect a non dividing cell. This ability to enter the nucleus is specific of lentiviruses, other retroviruses cannot and rely on cell division to access cell chromosomes. In the third step, termed strand transfer, the integrase protein joins the previously processed 3' ends to the 5' ends of strands of target cellular DNA at the site of integration. The 5'-ends are produced by integrase-catalyzed staggered cuts, 5 bp apart. A Y-shaped, gapped, recombination intermediate results, with the 5'-ends of the viral DNA strands and the 3' ends of target DNA strands remaining unjoined, flanking a gap of 5 bp. The last step is viral DNA integration into host chromosome. This involves host DNA repair synthesis in which the 5 bp gaps between the unjoined strands are filled in and then ligated. Since this process occurs at both cuts flanking the HIV genome, a 5 bp duplication of host DNA is produced at the ends of HIV-1 integration. Alternatively, Integrase may catalyze the excision of viral DNA just after strand transfer, this is termed disintegration. The chain is Gag-Pol polyprotein (gag-pol) from Human immunodeficiency virus type 2 subtype A (isolate SBLISY) (HIV-2).